A 529-amino-acid polypeptide reads, in one-letter code: MQQRRPIRRALLSVSDKAGIVEFAQALSARGVELLSTGGTARLLAEKGLPVTEVSDYTGFPEMMDGRVKTLHPKVHGGILGRRGQDDAIMEEHQIQPIDMVVVNLYPFAKTVAREGCSLEDAVENIDIGGPTMVRSAAKNHKDVAIVVKSSDYDAIIKEMDDNEGSLTLATRFDLAIKAFEHTAAYDSMIANYFGSMVPAYHGESKEAAGRFPRTLNLNFIKKQDMRYGENSHQQAAFYIEENVKEASVATATQVQGKALSYNNIADTDAALECVKEFAEPACVIVKHANPCGVAISNSILDAYDRAYKTDPTSAFGGIIAFNRELDAETAQAIISRQFVEVIIAPSASEEALKITAAKQNVRVLTCGQWGERVPGLDFKRVNGGLLVQDRDLGMVGAEELRVVTQRQPTEQELRDALFCWKVAKFVKSNAIVYAKNNMTIGIGAGQMSRVYSAKIAGIKAADEGLEVKGSSMASDAFFPFRDGIDAAAAAGVTCVIQPGGSIRDDEVIAAADEHGIAMLFTDMRHFRH.

The 148-residue stretch at methionine 1 to valine 148 folds into the MGS-like domain. Lysine 287 carries the N6-acetyllysine modification.

The protein belongs to the PurH family.

It carries out the reaction (6R)-10-formyltetrahydrofolate + 5-amino-1-(5-phospho-beta-D-ribosyl)imidazole-4-carboxamide = 5-formamido-1-(5-phospho-D-ribosyl)imidazole-4-carboxamide + (6S)-5,6,7,8-tetrahydrofolate. The enzyme catalyses IMP + H2O = 5-formamido-1-(5-phospho-D-ribosyl)imidazole-4-carboxamide. It functions in the pathway purine metabolism; IMP biosynthesis via de novo pathway; 5-formamido-1-(5-phospho-D-ribosyl)imidazole-4-carboxamide from 5-amino-1-(5-phospho-D-ribosyl)imidazole-4-carboxamide (10-formyl THF route): step 1/1. It participates in purine metabolism; IMP biosynthesis via de novo pathway; IMP from 5-formamido-1-(5-phospho-D-ribosyl)imidazole-4-carboxamide: step 1/1. The sequence is that of Bifunctional purine biosynthesis protein PurH from Escherichia coli O139:H28 (strain E24377A / ETEC).